The following is a 305-amino-acid chain: Oxygen-dependent coproporphyrinogen-III oxidase (305 aa).

Position 97 (Ser97) interacts with substrate. 2 residues coordinate a divalent metal cation: His101 and His111. Residue His111 is the Proton donor of the active site. 113–115 (NVR) serves as a coordination point for substrate. A divalent metal cation-binding residues include His150 and His180. The tract at residues 245–280 (YVEFNLVWDRGTHFGLQSGGRTESILLSMPPLASWA) is important for dimerization. 263–265 (GGR) is a substrate binding site.

It belongs to the aerobic coproporphyrinogen-III oxidase family. Homodimer. Requires a divalent metal cation as cofactor.

It localises to the cytoplasm. The enzyme catalyses coproporphyrinogen III + O2 + 2 H(+) = protoporphyrinogen IX + 2 CO2 + 2 H2O. It participates in porphyrin-containing compound metabolism; protoporphyrin-IX biosynthesis; protoporphyrinogen-IX from coproporphyrinogen-III (O2 route): step 1/1. Its function is as follows. Involved in the heme biosynthesis. Catalyzes the aerobic oxidative decarboxylation of propionate groups of rings A and B of coproporphyrinogen-III to yield the vinyl groups in protoporphyrinogen-IX. The protein is Oxygen-dependent coproporphyrinogen-III oxidase of Variovorax paradoxus (strain S110).